The sequence spans 60 residues: Metallothionein (60 aa).

The tract at residues 1-28 is beta; the sequence is MDPCECSKGGTCNCGGSCTCTNCSCTTC. A divalent metal cation contacts are provided by Cys4, Cys6, Cys12, Cys14, Cys18, Cys20, Cys23, Cys25, Cys28, Cys32, Cys33, Cys35, Cys36, Cys40, Cys43, Cys47, Cys49, Cys54, Cys58, and Cys59. Residues 29–60 are alpha; it reads KKSCCPCCPSGCPKCASGCVCKGKTCDAACCQ.

This sequence belongs to the metallothionein superfamily. Type 1 family.

Its function is as follows. Metallothioneins have a high content of cysteine residues that bind various heavy metals. This is Metallothionein (mt) from Perca fluviatilis (European perch).